Consider the following 383-residue polypeptide: Carbamoyl phosphate synthase small chain (383 aa).

The tract at residues 1-190 is CPSase; the sequence is MPHPSSRQAH…FDQRLKQHPD (190 aa). Positions 51, 242, and 244 each coordinate L-glutamine. The 188-residue stretch at 194–381 folds into the Glutamine amidotransferase type-1 domain; that stretch reads RVVAIDFGIK…VALMADRRDV (188 aa). Catalysis depends on C271, which acts as the Nucleophile. Residues L272, Q275, N311, G313, and F314 each contribute to the L-glutamine site. Residues H354 and E356 contribute to the active site.

Belongs to the CarA family. Composed of two chains; the small (or glutamine) chain promotes the hydrolysis of glutamine to ammonia, which is used by the large (or ammonia) chain to synthesize carbamoyl phosphate. Tetramer of heterodimers (alpha,beta)4.

It catalyses the reaction hydrogencarbonate + L-glutamine + 2 ATP + H2O = carbamoyl phosphate + L-glutamate + 2 ADP + phosphate + 2 H(+). It carries out the reaction L-glutamine + H2O = L-glutamate + NH4(+). It participates in amino-acid biosynthesis; L-arginine biosynthesis; carbamoyl phosphate from bicarbonate: step 1/1. It functions in the pathway pyrimidine metabolism; UMP biosynthesis via de novo pathway; (S)-dihydroorotate from bicarbonate: step 1/3. Its function is as follows. Small subunit of the glutamine-dependent carbamoyl phosphate synthetase (CPSase). CPSase catalyzes the formation of carbamoyl phosphate from the ammonia moiety of glutamine, carbonate, and phosphate donated by ATP, constituting the first step of 2 biosynthetic pathways, one leading to arginine and/or urea and the other to pyrimidine nucleotides. The small subunit (glutamine amidotransferase) binds and cleaves glutamine to supply the large subunit with the substrate ammonia. The polypeptide is Carbamoyl phosphate synthase small chain (Parasynechococcus marenigrum (strain WH8102)).